The chain runs to 615 residues: Proteasome-associated ATPase (615 aa).

Residues 1-27 (MSESERSEASEVFGTSPDSRLSSEDAA) form a disordered region. The stretch at 22–99 (SSEDAAELEQ…LREEVDRLGQ (78 aa)) forms a coiled coil. 302–307 (GCGKTL) provides a ligand contact to ATP. The interval 614–615 (YL) is docks into pockets in the proteasome alpha-ring.

The protein belongs to the AAA ATPase family. In terms of assembly, homohexamer. Assembles into a hexameric ring structure that caps the 20S proteasome core. Strongly interacts with the prokaryotic ubiquitin-like protein Pup through a hydrophobic interface; the interacting region of ARC lies in its N-terminal coiled-coil domain. There is one Pup binding site per ARC hexamer ring. Upon ATP-binding, the C-terminus of ARC interacts with the alpha-rings of the proteasome core, possibly by binding to the intersubunit pockets.

It functions in the pathway protein degradation; proteasomal Pup-dependent pathway. ATPase which is responsible for recognizing, binding, unfolding and translocation of pupylated proteins into the bacterial 20S proteasome core particle. May be essential for opening the gate of the 20S proteasome via an interaction with its C-terminus, thereby allowing substrate entry and access to the site of proteolysis. Thus, the C-termini of the proteasomal ATPase may function like a 'key in a lock' to induce gate opening and therefore regulate proteolysis. The polypeptide is Proteasome-associated ATPase (Mycolicibacterium vanbaalenii (strain DSM 7251 / JCM 13017 / BCRC 16820 / KCTC 9966 / NRRL B-24157 / PYR-1) (Mycobacterium vanbaalenii)).